We begin with the raw amino-acid sequence, 593 residues long: DNA primase (593 aa).

The segment at 38 to 62 adopts a CHC2-type zinc-finger fold; it reads CPFHQEKTPSFTVSDSKRFFYCFGC. One can recognise a Toprim domain in the interval 250-332; it reads NRSILVEGYF…EKKISFIRLP (83 aa). Residues Glu256, Asp300, and Asp302 each coordinate Mg(2+).

The protein belongs to the DnaG primase family. In terms of assembly, monomer. Interacts with DnaB. Zn(2+) is required as a cofactor. The cofactor is Mg(2+).

The enzyme catalyses ssDNA + n NTP = ssDNA/pppN(pN)n-1 hybrid + (n-1) diphosphate.. In terms of biological role, RNA polymerase that catalyzes the synthesis of short RNA molecules used as primers for DNA polymerase during DNA replication. The protein is DNA primase of Rickettsia prowazekii (strain Madrid E).